A 502-amino-acid chain; its full sequence is UTP--glucose-1-phosphate uridylyltransferase 2 (502 aa).

Residues 1 to 20 (MMKPDLNSPLPQSPQLQAFG) are disordered. Polar residues predominate over residues 9–20 (PLPQSPQLQAFG). UTP-binding positions include 114 to 117 (LNGG), Lys-128, Gln-191, and Gly-220. 116-117 (GG) is a binding site for substrate. Substrate-binding positions include His-221 and 249–251 (NVD). 2 residues coordinate UTP: Asp-251 and Lys-390.

This sequence belongs to the UDPGP type 1 family.

It carries out the reaction alpha-D-glucose 1-phosphate + UTP + H(+) = UDP-alpha-D-glucose + diphosphate. Functionally, plays a central role as a glucosyl donor in cellular metabolic pathways. This chain is UTP--glucose-1-phosphate uridylyltransferase 2 (ugpB), found in Dictyostelium discoideum (Social amoeba).